We begin with the raw amino-acid sequence, 229 residues long: UPF0173 metal-dependent hydrolase SERP1270 (229 aa).

This sequence belongs to the UPF0173 family.

The chain is UPF0173 metal-dependent hydrolase SERP1270 from Staphylococcus epidermidis (strain ATCC 35984 / DSM 28319 / BCRC 17069 / CCUG 31568 / BM 3577 / RP62A).